A 216-amino-acid polypeptide reads, in one-letter code: Pyridoxine/pyridoxamine 5'-phosphate oxidase (216 aa).

FMN contacts are provided by residues 63 to 68 (RMVLMK), 78 to 79 (YS), lysine 85, and glutamine 107. Residue lysine 68 coordinates substrate. Residues tyrosine 125 and arginine 129 each contribute to the substrate site. FMN-binding positions include 142–143 (QS) and tryptophan 187. A substrate-binding site is contributed by 193–195 (RLH). Residue arginine 197 coordinates FMN.

This sequence belongs to the pyridoxamine 5'-phosphate oxidase family. In terms of assembly, homodimer. The cofactor is FMN.

It catalyses the reaction pyridoxamine 5'-phosphate + O2 + H2O = pyridoxal 5'-phosphate + H2O2 + NH4(+). The enzyme catalyses pyridoxine 5'-phosphate + O2 = pyridoxal 5'-phosphate + H2O2. It functions in the pathway cofactor metabolism; pyridoxal 5'-phosphate salvage; pyridoxal 5'-phosphate from pyridoxamine 5'-phosphate: step 1/1. It participates in cofactor metabolism; pyridoxal 5'-phosphate salvage; pyridoxal 5'-phosphate from pyridoxine 5'-phosphate: step 1/1. Functionally, catalyzes the oxidation of either pyridoxine 5'-phosphate (PNP) or pyridoxamine 5'-phosphate (PMP) into pyridoxal 5'-phosphate (PLP). The protein is Pyridoxine/pyridoxamine 5'-phosphate oxidase of Bradyrhizobium sp. (strain ORS 278).